Reading from the N-terminus, the 253-residue chain is 5-oxoprolinase subunit A (253 aa).

Belongs to the LamB/PxpA family. In terms of assembly, forms a complex composed of PxpA, PxpB and PxpC.

It catalyses the reaction 5-oxo-L-proline + ATP + 2 H2O = L-glutamate + ADP + phosphate + H(+). Functionally, catalyzes the cleavage of 5-oxoproline to form L-glutamate coupled to the hydrolysis of ATP to ADP and inorganic phosphate. This Bacillus cereus (strain AH820) protein is 5-oxoprolinase subunit A.